Reading from the N-terminus, the 198-residue chain is Inosine triphosphate pyrophosphatase (198 aa).

A2 is subject to N-acetylalanine. 14-19 provides a ligand contact to ITP; sequence TGNAKK. E44 is a binding site for Mg(2+). ITP-binding positions include K56, 72–73, and K89; that span reads DT. S146 carries the post-translational modification Phosphoserine. ITP-binding positions include 149-152, K172, and 177-178; these read FGWD and HR.

It belongs to the HAM1 NTPase family. In terms of assembly, homodimer. It depends on Mg(2+) as a cofactor. Mn(2+) serves as cofactor.

The protein resides in the cytoplasm. The catalysed reaction is ITP + H2O = IMP + diphosphate + H(+). It carries out the reaction dITP + H2O = dIMP + diphosphate + H(+). It catalyses the reaction XTP + H2O = XMP + diphosphate + H(+). The enzyme catalyses N(6)-hydroxy-dATP + H2O = N(6)-hydroxy-dAMP + diphosphate + H(+). Functionally, pyrophosphatase that hydrolyzes the non-canonical purine nucleotides inosine triphosphate (ITP), deoxyinosine triphosphate (dITP) as well as 2'-deoxy-N-6-hydroxylaminopurine triphosphate (dHAPTP) and xanthosine 5'-triphosphate (XTP) to their respective monophosphate derivatives. The enzyme does not distinguish between the deoxy- and ribose forms. Probably excludes non-canonical purines from RNA and DNA precursor pools, thus preventing their incorporation into RNA and DNA and avoiding chromosomal lesions. This Mus musculus (Mouse) protein is Inosine triphosphate pyrophosphatase (Itpa).